A 281-amino-acid chain; its full sequence is Pantothenate synthetase (281 aa).

31 to 38 (MGNLHAGH) contributes to the ATP binding site. Histidine 38 serves as the catalytic Proton donor. Position 62 (glutamine 62) interacts with (R)-pantoate. Glutamine 62 lines the beta-alanine pocket. 150–153 (GKKD) is a binding site for ATP. Glutamine 156 provides a ligand contact to (R)-pantoate. ATP contacts are provided by residues valine 179 and 187 to 190 (MSSR).

This sequence belongs to the pantothenate synthetase family. Homodimer.

Its subcellular location is the cytoplasm. It carries out the reaction (R)-pantoate + beta-alanine + ATP = (R)-pantothenate + AMP + diphosphate + H(+). It participates in cofactor biosynthesis; (R)-pantothenate biosynthesis; (R)-pantothenate from (R)-pantoate and beta-alanine: step 1/1. In terms of biological role, catalyzes the condensation of pantoate with beta-alanine in an ATP-dependent reaction via a pantoyl-adenylate intermediate. This is Pantothenate synthetase from Xylella fastidiosa (strain 9a5c).